The sequence spans 510 residues: NAD(P)H-quinone oxidoreductase subunit 2, chloroplastic (510 aa).

Helical transmembrane passes span 28-48, 57-77, 99-119, 124-144, 149-169, 183-203, 227-247, 295-315, 323-343, 354-374, 395-415, 418-438, and 484-504; these read DGSF…LLII, IPWL…TLLF, IFQF…VEYI, MALT…MFLC, LITI…LSGY, YLLM…WLYG, PGIS…LSPA, WHLL…LIAI, MLAY…IVGD, YMLF…LFGL, ALSL…AGFF, LYLF…IGLL, and MIVC…IIAI.

This sequence belongs to the complex I subunit 2 family. As to quaternary structure, NDH is composed of at least 16 different subunits, 5 of which are encoded in the nucleus.

Its subcellular location is the plastid. It localises to the chloroplast thylakoid membrane. The enzyme catalyses a plastoquinone + NADH + (n+1) H(+)(in) = a plastoquinol + NAD(+) + n H(+)(out). It catalyses the reaction a plastoquinone + NADPH + (n+1) H(+)(in) = a plastoquinol + NADP(+) + n H(+)(out). NDH shuttles electrons from NAD(P)H:plastoquinone, via FMN and iron-sulfur (Fe-S) centers, to quinones in the photosynthetic chain and possibly in a chloroplast respiratory chain. The immediate electron acceptor for the enzyme in this species is believed to be plastoquinone. Couples the redox reaction to proton translocation, and thus conserves the redox energy in a proton gradient. The chain is NAD(P)H-quinone oxidoreductase subunit 2, chloroplastic from Silene latifolia (White campion).